The sequence spans 449 residues: Trigger factor (449 aa).

Residues G173 to P258 enclose the PPIase FKBP-type domain.

This sequence belongs to the FKBP-type PPIase family. Tig subfamily.

Its subcellular location is the cytoplasm. It carries out the reaction [protein]-peptidylproline (omega=180) = [protein]-peptidylproline (omega=0). Its function is as follows. Involved in protein export. Acts as a chaperone by maintaining the newly synthesized protein in an open conformation. Functions as a peptidyl-prolyl cis-trans isomerase. The sequence is that of Trigger factor from Burkholderia mallei (strain NCTC 10229).